The following is a 432-amino-acid chain: Serine hydroxymethyltransferase (432 aa).

Residues leucine 127 and 131-133 contribute to the (6S)-5,6,7,8-tetrahydrofolate site; that span reads GHL. At lysine 236 the chain carries N6-(pyridoxal phosphate)lysine.

The protein belongs to the SHMT family. As to quaternary structure, homodimer. The cofactor is pyridoxal 5'-phosphate.

The protein localises to the cytoplasm. The catalysed reaction is (6R)-5,10-methylene-5,6,7,8-tetrahydrofolate + glycine + H2O = (6S)-5,6,7,8-tetrahydrofolate + L-serine. It participates in one-carbon metabolism; tetrahydrofolate interconversion. Its pathway is amino-acid biosynthesis; glycine biosynthesis; glycine from L-serine: step 1/1. In terms of biological role, catalyzes the reversible interconversion of serine and glycine with tetrahydrofolate (THF) serving as the one-carbon carrier. This reaction serves as the major source of one-carbon groups required for the biosynthesis of purines, thymidylate, methionine, and other important biomolecules. Also exhibits THF-independent aldolase activity toward beta-hydroxyamino acids, producing glycine and aldehydes, via a retro-aldol mechanism. This chain is Serine hydroxymethyltransferase, found in Rhizobium etli (strain ATCC 51251 / DSM 11541 / JCM 21823 / NBRC 15573 / CFN 42).